The primary structure comprises 130 residues: Flagellar assembly factor FliW (130 aa).

Belongs to the FliW family. As to quaternary structure, interacts with translational regulator CsrA and flagellin(s).

The protein resides in the cytoplasm. Functionally, acts as an anti-CsrA protein, binds CsrA and prevents it from repressing translation of its target genes, one of which is flagellin. Binds to flagellin and participates in the assembly of the flagellum. The protein is Flagellar assembly factor FliW of Borrelia hermsii (strain HS1 / DAH).